The following is a 242-amino-acid chain: Segregation and condensation protein A (242 aa).

This sequence belongs to the ScpA family. In terms of assembly, component of a cohesin-like complex composed of ScpA, ScpB and the Smc homodimer, in which ScpA and ScpB bind to the head domain of Smc. The presence of the three proteins is required for the association of the complex with DNA.

Its subcellular location is the cytoplasm. In terms of biological role, participates in chromosomal partition during cell division. May act via the formation of a condensin-like complex containing Smc and ScpB that pull DNA away from mid-cell into both cell halves. In Streptococcus pneumoniae (strain Taiwan19F-14), this protein is Segregation and condensation protein A.